The following is a 446-amino-acid chain: Exodeoxyribonuclease 7 large subunit (446 aa).

This sequence belongs to the XseA family. Heterooligomer composed of large and small subunits.

It is found in the cytoplasm. The catalysed reaction is Exonucleolytic cleavage in either 5'- to 3'- or 3'- to 5'-direction to yield nucleoside 5'-phosphates.. Bidirectionally degrades single-stranded DNA into large acid-insoluble oligonucleotides, which are then degraded further into small acid-soluble oligonucleotides. This is Exodeoxyribonuclease 7 large subunit from Streptococcus pneumoniae (strain Hungary19A-6).